We begin with the raw amino-acid sequence, 247 residues long: PF03932 family protein CutC (247 aa).

This sequence belongs to the CutC family.

It is found in the cytoplasm. The sequence is that of PF03932 family protein CutC from Klebsiella pneumoniae subsp. pneumoniae (strain ATCC 700721 / MGH 78578).